The primary structure comprises 201 residues: L-rhamnose-binding lectin SML (201 aa).

8 disulfide bridges follow: Cys10/Cys40, Cys20/Cys99, Cys54/Cys86, Cys67/Cys73, Cys108/Cys138, Cys117/Cys195, Cys152/Cys182, and Cys163/Cys169. 2 consecutive SUEL-type lectin domains span residues 18-100 (LSCD…YNCF) and 107-196 (TCEH…YVCQ). Asn168 is a glycosylation site (N-linked (GlcNAc...) asparagine).

Homodimer; non-covalently linked.

Rhamnose-binding lectin. Also binds melibiose, raffinose, D-galactose, L-arabinose, D-fucose, maltose and D-glucose with decreasing affinity. Does not bind D-arabinose, L-fucose, lactose, xylose or 2-deoxy-D-galactose. Shows strong hemagglutinating activity against rabbit erythrocytes. The sequence is that of L-rhamnose-binding lectin SML from Scomberomorus niphonius (Japanese Spanish mackerel).